We begin with the raw amino-acid sequence, 194 residues long: Naphthalene 1,2-dioxygenase system, small oxygenase component (194 aa).

The protein belongs to the bacterial ring-hydroxylating dioxygenase beta subunit family. As to quaternary structure, the naphthalene dioxygenase (NDO) multicomponent enzyme system is composed of an electron transfer component and a dioxygenase component (iron sulfur protein (ISP)). The electron transfer component is composed of a ferredoxin reductase (NdoR) and a ferredoxin (NdoA), and the dioxygenase component is formed of a heterohexamer (trimer of heterodimers) of three large alpha subunits (NdoB) and three small beta subunits (NdoC).

Its pathway is aromatic compound metabolism; naphthalene degradation. Component of the naphthalene dioxygenase (NDO) multicomponent enzyme system which catalyzes the incorporation of both atoms of molecular oxygen into naphthalene to form cis-(1R,2S)-dihydroxy-1,2-dihydronaphthalene. The beta subunit seems to have a structural role in the holoenzyme. Also able to catalyze the cis-dihydroxylation of biphenyl and phenanthrene. The chain is Naphthalene 1,2-dioxygenase system, small oxygenase component from Pseudomonas putida (Arthrobacter siderocapsulatus).